Reading from the N-terminus, the 535-residue chain is GPI mannosyltransferase 4 (535 aa).

The Cytoplasmic portion of the chain corresponds to 1–10 (MSLSLDFNWR). The helical transmembrane segment at 11–31 (YVYLIAIGLKFVLALSNSYIH) threads the bilayer. The Lumenal segment spans residues 32–91 (PDEHFQSFEVLTNKIFSFTTTTPWEFSSDTPARSFGPLYLFYAPLLYSIKLVGYELSPLQ). The chain crosses the membrane as a helical span at residues 92–112 (IWYMARLQNVLIGWVITDMCI). Residues 113 to 141 (YRLLPTKPERIKGLFYTSTSYITLVYQSH) are Cytoplasmic-facing. Residues 142–162 (CFSNSIETWLVLICVLVINDL) form a helical membrane-spanning segment. The Lumenal portion of the chain corresponds to 163–181 (RFIQESNVPELQSQRQYQK). Residues 182–202 (LFWFGALVSIGIFNRITFPAF) form a helical membrane-spanning segment. Residues 203–220 (LALPSLYLMKYFRHNKMS) lie on the Cytoplasmic side of the membrane. Residues 221-241 (AIFSLLGFMLPTIAIILLDTF) traverse the membrane as a helical segment. Residues 242–284 (EFNGSIDDILKHPLDFNSYVITPLNNLIYNSKVENLSNHGLHP) are Lumenal-facing. 2 N-linked (GlcNAc...) asparagine glycosylation sites follow: Asn244 and Asn276. Residues 285–305 (YYTHLLVNLPQILGPGLFFMV) traverse the membrane as a helical segment. Over 306–311 (SNFKNQ) the chain is Cytoplasmic. Residues 312–332 (YWKTTPFLAVISGVSVLSLIP) form a helical membrane-spanning segment. Residues 333–337 (HQELR) lie on the Lumenal side of the membrane. Residues 338-358 (FLIPIVPLVCCCFDLKNISSA) form a helical membrane-spanning segment. The Cytoplasmic segment spans residues 359 to 370 (SKGERITKAPPM). A helical membrane pass occupies residues 371 to 391 (VSVLMNLWYLFNILLAVLMGV). At 392–535 (YHQGGIVPAL…KPGLGIYELL (144 aa)) the chain is on the lumenal side. An N-linked (GlcNAc...) asparagine glycan is attached at Asn507.

It belongs to the glycosyltransferase 22 family. PIGZ subfamily.

The protein localises to the endoplasmic reticulum membrane. It participates in glycolipid biosynthesis; glycosylphosphatidylinositol-anchor biosynthesis. In terms of biological role, alpha-1,2-mannosyltransferase involved in glycosylphosphatidylinositol-anchor biosynthesis. Transfers a fourth mannose to trimannosyl-GPIs during GPI precursor assembly. The presence of a fourth mannose in GPI is essential in fungi. The sequence is that of GPI mannosyltransferase 4 (SMP3) from Debaryomyces hansenii (strain ATCC 36239 / CBS 767 / BCRC 21394 / JCM 1990 / NBRC 0083 / IGC 2968) (Yeast).